The sequence spans 204 residues: Dephospho-CoA kinase (204 aa).

Residues 12 to 204 enclose the DPCK domain; it reads RIGVTGGIAS…AWRDQISSIC (193 aa). ATP is bound at residue 20–25; that stretch reads ASGKSS.

It belongs to the CoaE family.

It localises to the cytoplasm. The catalysed reaction is 3'-dephospho-CoA + ATP = ADP + CoA + H(+). The protein operates within cofactor biosynthesis; coenzyme A biosynthesis; CoA from (R)-pantothenate: step 5/5. Functionally, catalyzes the phosphorylation of the 3'-hydroxyl group of dephosphocoenzyme A to form coenzyme A. This chain is Dephospho-CoA kinase, found in Prochlorococcus marinus (strain MIT 9313).